A 227-amino-acid chain; its full sequence is Ribose-5-phosphate isomerase A (227 aa).

Residues T28–T31, D81–D84, and K94–G97 each bind substrate. The active-site Proton acceptor is the E103. K121 is a substrate binding site.

It belongs to the ribose 5-phosphate isomerase family. As to quaternary structure, homodimer.

It catalyses the reaction aldehydo-D-ribose 5-phosphate = D-ribulose 5-phosphate. It participates in carbohydrate degradation; pentose phosphate pathway; D-ribose 5-phosphate from D-ribulose 5-phosphate (non-oxidative stage): step 1/1. Its function is as follows. Catalyzes the reversible conversion of ribose-5-phosphate to ribulose 5-phosphate. This Caulobacter vibrioides (strain ATCC 19089 / CIP 103742 / CB 15) (Caulobacter crescentus) protein is Ribose-5-phosphate isomerase A.